The following is a 520-amino-acid chain: Versicolorin B desaturase (520 aa).

Residues 22–42 (IFTTILSIFGIALSAVAAWGI) traverse the membrane as a helical segment. 2 N-linked (GlcNAc...) asparagine glycosylation sites follow: Asn-266 and Asn-426. Residue Cys-462 coordinates heme.

It belongs to the cytochrome P450 family. The cofactor is heme.

Its subcellular location is the membrane. It carries out the reaction versicolorin B + NADPH + O2 + H(+) = versicolorin A + NADP(+) + 2 H2O. It functions in the pathway mycotoxin biosynthesis. Its function is as follows. Versicolorin B desaturase; part of the fragmented gene cluster that mediates the biosynthesis of dothistromin (DOTH), a polyketide toxin very similar in structure to the aflatoxin precursor, versicolorin B. The first step of the pathway is the conversion of acetate to norsolorinic acid (NOR) and requires the fatty acid synthase subunits hexA and hexB, as well as the polyketide synthase pksA. PksA combines a hexanoyl starter unit and 7 malonyl-CoA extender units to synthesize the precursor NOR. The hexanoyl starter unit is provided to the acyl-carrier protein (ACP) domain by the fungal fatty acid synthase hexA/hexB. The second step is the conversion of NOR to averantin (AVN) and requires the norsolorinic acid ketoreductase nor1, which catalyzes the dehydration of norsolorinic acid to form (1'S)-averantin. The cytochrome P450 monooxygenase avnA then catalyzes the hydroxylation of AVN to 5'hydroxyaverantin (HAVN). The next step is performed by adhA that transforms HAVN to averufin (AVF). Averufin might then be converted to hydroxyversicolorone by cypX and avfA. Hydroxyversicolorone is further converted versiconal hemiacetal acetate (VHA) by moxY. VHA is then the substrate for the versiconal hemiacetal acetate esterase est1 to yield versiconal (VAL). Versicolorin B synthase vbsA then converts VAL to versicolorin B (VERB) by closing the bisfuran ring. Then, the activity of the versicolorin B desaturase verB leads to versicolorin A (VERA). DotB, a predicted chloroperoxidase, may perform epoxidation of the A-ring of VERA. Alternatively, a cytochrome P450, such as cypX or avnA could catalyze this step. It is also possible that another, uncharacterized, cytochrome P450 enzyme is responsible for this step. Opening of the epoxide could potentially be achieved by the epoxide hydrolase epoA. However, epoA seems not to be required for DOTH biosynthesis, but other epoxide hydrolases may have the ability to complement this hydrolysis. Alternatively, opening of the epoxide ring could be achieved non-enzymatically. The next step is the deoxygenation of ring A to yield the 5,8-dihydroxyanthraquinone which is most likely catalyzed by the NADPH dehydrogenase encoded by ver1. The last stages of DOTH biosynthesis are proposed to involve hydroxylation of the bisfuran. OrdB and norB might have oxidative roles here. An alternative possibility is that cytochrome P450 monoogenases such as avnA and cypX might perform these steps in addition to previously proposed steps. The chain is Versicolorin B desaturase from Dothistroma septosporum (strain NZE10 / CBS 128990) (Red band needle blight fungus).